Here is a 205-residue protein sequence, read N- to C-terminus: MTTQYGFFIDSSRCTGCKTCELACKDYKDLTPEVSFRRIYEYAGGDWQEDNGVWHQNVFAYYLSISCNHCEDPACTKVCPSGAMHKREDGFVVVDEDVCIGCRYCHMACPYGAPQYNETKGHMTKCDGCYDRVAEGKKPICVESCPLRALDFGPIDELRKKHGDLAAVAPLPRAHFTKPNIVIKPNANSRPTGDTTGYLANPKEV.

4Fe-4S ferredoxin-type domains are found at residues 5-33 (YGFFIDSSRCTGCKTCELACKDYKDLTPE), 59-89 (FAYYLSISCNHCEDPACTKVCPSGAMHKRED), and 90-119 (GFVVVDEDVCIGCRYCHMACPYGAPQYNET). Residues cysteine 14, cysteine 17, cysteine 20, cysteine 24, cysteine 67, cysteine 70, cysteine 75, cysteine 79, cysteine 99, cysteine 102, cysteine 105, cysteine 109, cysteine 126, cysteine 129, cysteine 141, and cysteine 145 each coordinate [4Fe-4S] cluster. The tract at residues 184–205 (KPNANSRPTGDTTGYLANPKEV) is disordered. Over residues 186–195 (NANSRPTGDT) the composition is skewed to polar residues.

As to quaternary structure, heterotrimeric enzyme composed of a catalytic heterodimer (DmsAB) and a membrane anchor protein (DmsC). Requires [4Fe-4S] cluster as cofactor.

In terms of biological role, electron transfer subunit of the terminal reductase during anaerobic growth on various sulfoxide and N-oxide compounds. The sequence is that of Anaerobic dimethyl sulfoxide reductase chain B (dmsB) from Escherichia coli (strain K12).